The following is a 335-amino-acid chain: Glycerol-3-phosphate dehydrogenase [NAD(P)+] (335 aa).

Residues serine 12, tryptophan 13, and lysine 107 each coordinate NADPH. Residues lysine 107, glycine 138, and serine 140 each coordinate sn-glycerol 3-phosphate. Alanine 142 is a binding site for NADPH. Sn-glycerol 3-phosphate contacts are provided by lysine 193, aspartate 246, serine 256, arginine 257, and asparagine 258. Catalysis depends on lysine 193, which acts as the Proton acceptor. Residue arginine 257 coordinates NADPH. Positions 281 and 283 each coordinate NADPH.

Belongs to the NAD-dependent glycerol-3-phosphate dehydrogenase family.

The protein localises to the cytoplasm. It carries out the reaction sn-glycerol 3-phosphate + NAD(+) = dihydroxyacetone phosphate + NADH + H(+). It catalyses the reaction sn-glycerol 3-phosphate + NADP(+) = dihydroxyacetone phosphate + NADPH + H(+). The protein operates within membrane lipid metabolism; glycerophospholipid metabolism. In terms of biological role, catalyzes the reduction of the glycolytic intermediate dihydroxyacetone phosphate (DHAP) to sn-glycerol 3-phosphate (G3P), the key precursor for phospholipid synthesis. The polypeptide is Glycerol-3-phosphate dehydrogenase [NAD(P)+] (Geobacter sp. (strain M21)).